The following is a 59-amino-acid chain: Small, acid-soluble spore protein H (59 aa).

This sequence belongs to the SspH family.

The protein localises to the spore core. This is Small, acid-soluble spore protein H from Alkaliphilus metalliredigens (strain QYMF).